A 338-amino-acid polypeptide reads, in one-letter code: Glyceraldehyde-3-phosphate dehydrogenase (338 aa).

NAD(+)-binding positions include Arg-12–Ile-13, Asp-38, and Ser-125. Residues Ser-155 to Thr-157, Thr-186, Thr-216 to Gly-217, and Arg-239 each bind D-glyceraldehyde 3-phosphate. The active-site Nucleophile is the Cys-156. Asn-320 contacts NAD(+).

This sequence belongs to the glyceraldehyde-3-phosphate dehydrogenase family. In terms of assembly, homotetramer.

The protein localises to the cytoplasm. The enzyme catalyses D-glyceraldehyde 3-phosphate + phosphate + NAD(+) = (2R)-3-phospho-glyceroyl phosphate + NADH + H(+). It participates in carbohydrate degradation; glycolysis; pyruvate from D-glyceraldehyde 3-phosphate: step 1/5. Functionally, catalyzes the oxidative phosphorylation of glyceraldehyde 3-phosphate (G3P) to 1,3-bisphosphoglycerate (BPG) using the cofactor NAD. The first reaction step involves the formation of a hemiacetal intermediate between G3P and a cysteine residue, and this hemiacetal intermediate is then oxidized to a thioester, with concomitant reduction of NAD to NADH. The reduced NADH is then exchanged with the second NAD, and the thioester is attacked by a nucleophilic inorganic phosphate to produce BPG. The sequence is that of Glyceraldehyde-3-phosphate dehydrogenase (gap) from Lactobacillus delbrueckii subsp. bulgaricus.